The chain runs to 201 residues: Large ribosomal subunit protein bL25 (201 aa).

The tract at residues 181–201 (APRESEEEAEEEATETAKESE) is disordered. Residues 185 to 194 (SEEEAEEEAT) show a composition bias toward acidic residues.

It belongs to the bacterial ribosomal protein bL25 family. CTC subfamily. In terms of assembly, part of the 50S ribosomal subunit; part of the 5S rRNA/L5/L18/L25 subcomplex. Contacts the 5S rRNA. Binds to the 5S rRNA independently of L5 and L18.

Functionally, this is one of the proteins that binds to the 5S RNA in the ribosome where it forms part of the central protuberance. In Thermoanaerobacter pseudethanolicus (strain ATCC 33223 / 39E) (Clostridium thermohydrosulfuricum), this protein is Large ribosomal subunit protein bL25.